Here is a 139-residue protein sequence, read N- to C-terminus: Heavy metal-associated isoprenylated plant protein 13 (139 aa).

The 68-residue stretch at 3 to 70 (PMKAVLQLSI…LCNTELVSVE (68 aa)) folds into the HMA domain. A disordered region spans residues 70–94 (EVVKPPEKKPEPEKPAPPKPAPAPA). Positions 73-85 (KPPEKKPEPEKPA) are enriched in basic and acidic residues. Cysteine methyl ester is present on Cys136. Residue Cys136 is the site of S-farnesyl cysteine attachment. The propeptide at 137–139 (VIM) is removed in mature form.

It belongs to the HIPP family.

Functionally, probable heavy-metal-binding protein. In Arabidopsis thaliana (Mouse-ear cress), this protein is Heavy metal-associated isoprenylated plant protein 13.